The primary structure comprises 180 residues: UPF0102 protein Tery_0733 (180 aa).

It belongs to the UPF0102 family.

This is UPF0102 protein Tery_0733 from Trichodesmium erythraeum (strain IMS101).